The chain runs to 393 residues: MKKLLKSVLVFAALSSASSLQALPVGNPAEPSLMIDGILWEGFGGDPCDPCTTWCDAISMRMGYYGDFVFDRVLQTDVNKEFQMGAKPTATTGNAAAPSTCTARENPAYGRHMQDAEMFTNAAYMALNIWDRFDVFCTLGATSGYLKGNSASFNLVGLFGDNENQSTVKKDAVPNMSFDQSVVELYTDTTFAWSVGARAALWECGCATLGASFQYAQSKPKVEELNVLCNAAEFTINKPKGYVGKEFPLDLTAGTDAATGTKDASIDYHEWQASLALSYRLNMFTPYIGVKWSRASFDADTIRIAQPKLATAIFDTTTLNPTIAGAGEVKANAEGQLGDTMQIVSLQLNKMKSRKSCGIAVGTTIVDADKYAVTVETRLIDERAAHVNAQFRF.

Residues 1-22 form the signal peptide; that stretch reads MKKLLKSVLVFAALSSASSLQA.

It belongs to the chlamydial porin (CP) (TC 1.B.2) family. In terms of assembly, part of a disulfide cross-linked outer membrane complex (COMC) composed of the major outer membrane porin (MOMP), the small cysteine-rich protein (OmcA) and the large cysteine-rich periplasmic protein (OmcB).

The protein resides in the cell outer membrane. In elementary bodies (EBs, the infectious stage, which is able to survive outside the host cell) provides the structural integrity of the outer envelope through disulfide cross-links with the small cysteine-rich protein and the large cysteine-rich periplasmic protein. It has been described in publications as the Sarkosyl-insoluble COMC (Chlamydia outer membrane complex), and serves as the functional equivalent of peptidoglycan. In terms of biological role, permits diffusion of specific solutes through the outer membrane. The protein is Major outer membrane porin, serovar L1 (ompA) of Chlamydia trachomatis.